A 687-amino-acid polypeptide reads, in one-letter code: Bifunctional lysine-specific demethylase and histidyl-hydroxylase NO66 (687 aa).

The disordered stretch occupies residues 1-174 (MSDKNKKVSA…RSCPLPSKKN (174 aa)). Over residues 23–32 (DVQKGTKNSD) the composition is skewed to basic and acidic residues. 2 stretches are compositionally biased toward low complexity: residues 33-50 (KNGA…SKNG) and 58-74 (KKNG…SSSS). Over residues 75–96 (GEDEEDDSTDSSDEYESSESGE) the composition is skewed to acidic residues. Polar residues-rich tracts occupy residues 100 to 116 (LNSH…ANTR) and 136 to 156 (RTSS…QQPK). The JmjC domain maps to 347–483 (NPSSYLVQLR…NLMEKLMPLV (137 aa)). Fe cation contacts are provided by histidine 387, aspartate 389, and histidine 449.

It belongs to the ROX family. NO66 subfamily. Requires Fe(2+) as cofactor.

The protein localises to the nucleus. It carries out the reaction N(6),N(6)-dimethyl-L-lysyl(36)-[histone H3] + 2 2-oxoglutarate + 2 O2 = L-lysyl(36)-[histone H3] + 2 formaldehyde + 2 succinate + 2 CO2. Functionally, oxygenase that can act as both a histone lysine demethylase and a ribosomal histidine hydroxylase. Specifically demethylates 'Lys-4' (H3K4me) and 'Lys-36' (H3K36me) of histone H3, thereby playing a central role in histone code. In Drosophila persimilis (Fruit fly), this protein is Bifunctional lysine-specific demethylase and histidyl-hydroxylase NO66.